A 238-amino-acid chain; its full sequence is Phosphoribosylaminoimidazole-succinocarboxamide synthase (238 aa).

This sequence belongs to the SAICAR synthetase family.

It catalyses the reaction 5-amino-1-(5-phospho-D-ribosyl)imidazole-4-carboxylate + L-aspartate + ATP = (2S)-2-[5-amino-1-(5-phospho-beta-D-ribosyl)imidazole-4-carboxamido]succinate + ADP + phosphate + 2 H(+). It participates in purine metabolism; IMP biosynthesis via de novo pathway; 5-amino-1-(5-phospho-D-ribosyl)imidazole-4-carboxamide from 5-amino-1-(5-phospho-D-ribosyl)imidazole-4-carboxylate: step 1/2. The chain is Phosphoribosylaminoimidazole-succinocarboxamide synthase from Desulfitobacterium hafniense (strain DSM 10664 / DCB-2).